A 391-amino-acid chain; its full sequence is 3-ketoacyl-CoA thiolase (391 aa).

Catalysis depends on C95, which acts as the Acyl-thioester intermediate. Catalysis depends on proton acceptor residues H347 and C377.

It belongs to the thiolase-like superfamily. Thiolase family. Heterotetramer of two alpha chains (FadB) and two beta chains (FadA).

Its subcellular location is the cytoplasm. The enzyme catalyses an acyl-CoA + acetyl-CoA = a 3-oxoacyl-CoA + CoA. It functions in the pathway lipid metabolism; fatty acid beta-oxidation. In terms of biological role, catalyzes the final step of fatty acid oxidation in which acetyl-CoA is released and the CoA ester of a fatty acid two carbons shorter is formed. This chain is 3-ketoacyl-CoA thiolase, found in Saccharophagus degradans (strain 2-40 / ATCC 43961 / DSM 17024).